The sequence spans 112 residues: Thyroid transcription factor 1 (112 aa).

Residues 1–60 constitute a DNA-binding region (homeobox); it reads RRNRRVLFSQAQVYELERRFKQQKYLSAPEREHLASMIHLTPTQVKIWFQNHRYKMKRQA. The tract at residues 59-100 is disordered; the sequence is QAKDKAAQQQLQQDSGGGGGGGGAGCPQQQQAQQQSPRRVAV. Over residues 73–83 the composition is skewed to gly residues; the sequence is SGGGGGGGGAG. Residues 84-93 are compositionally biased toward low complexity; that stretch reads CPQQQQAQQQ.

It belongs to the NK-2 homeobox family. In terms of processing, phosphorylated on serine residues.

The protein resides in the nucleus. Transcription factor that binds and activates the promoter of thyroid specific genes such as thyroglobulin, thyroperoxidase, and thyrotropin receptor. Crucial in the maintenance of the thyroid differentiation phenotype. May play a role in lung development and surfactant homeostasis. This chain is Thyroid transcription factor 1 (TITF1), found in Cavia porcellus (Guinea pig).